Consider the following 440-residue polypeptide: Thymidine phosphorylase (440 aa).

Belongs to the thymidine/pyrimidine-nucleoside phosphorylase family. As to quaternary structure, homodimer.

The catalysed reaction is thymidine + phosphate = 2-deoxy-alpha-D-ribose 1-phosphate + thymine. It participates in pyrimidine metabolism; dTMP biosynthesis via salvage pathway; dTMP from thymine: step 1/2. The enzymes which catalyze the reversible phosphorolysis of pyrimidine nucleosides are involved in the degradation of these compounds and in their utilization as carbon and energy sources, or in the rescue of pyrimidine bases for nucleotide synthesis. In Salmonella agona (strain SL483), this protein is Thymidine phosphorylase.